The sequence spans 123 residues: Large ribosomal subunit protein bL12 (123 aa).

Belongs to the bacterial ribosomal protein bL12 family. In terms of assembly, homodimer. Part of the ribosomal stalk of the 50S ribosomal subunit. Forms a multimeric L10(L12)X complex, where L10 forms an elongated spine to which 2 to 4 L12 dimers bind in a sequential fashion. Binds GTP-bound translation factors.

Forms part of the ribosomal stalk which helps the ribosome interact with GTP-bound translation factors. Is thus essential for accurate translation. The polypeptide is Large ribosomal subunit protein bL12 (Metamycoplasma arthritidis (strain 158L3-1) (Mycoplasma arthritidis)).